A 220-amino-acid polypeptide reads, in one-letter code: Ribose-5-phosphate isomerase A (220 aa).

Residues 25 to 28, 80 to 83, and 93 to 96 contribute to the substrate site; these read TGST, DGAD, and KGGG. The Proton acceptor role is filled by glutamate 102. Lysine 120 is a binding site for substrate.

Belongs to the ribose 5-phosphate isomerase family. In terms of assembly, homodimer.

It carries out the reaction aldehydo-D-ribose 5-phosphate = D-ribulose 5-phosphate. Its pathway is carbohydrate degradation; pentose phosphate pathway; D-ribose 5-phosphate from D-ribulose 5-phosphate (non-oxidative stage): step 1/1. Its function is as follows. Catalyzes the reversible conversion of ribose-5-phosphate to ribulose 5-phosphate. This Bacillus thuringiensis subsp. konkukian (strain 97-27) protein is Ribose-5-phosphate isomerase A.